An 85-amino-acid polypeptide reads, in one-letter code: MAVKIRLRRMGAKKAPFYRVVVADSRSPRDGRFVEEIGYYNPISEPKAIKIDEEKAIKWVKNGAQPTDVVKRLFKEAGIDEKLSK.

Belongs to the bacterial ribosomal protein bS16 family.

The protein is Small ribosomal subunit protein bS16 of Clostridium novyi (strain NT).